Reading from the N-terminus, the 243-residue chain is DNA repair protein RecO (243 aa).

The protein belongs to the RecO family.

Its function is as follows. Involved in DNA repair and RecF pathway recombination. The protein is DNA repair protein RecO of Hyphomonas neptunium (strain ATCC 15444).